The primary structure comprises 121 residues: Large ribosomal subunit protein bL19 (121 aa).

The protein belongs to the bacterial ribosomal protein bL19 family.

Its function is as follows. This protein is located at the 30S-50S ribosomal subunit interface and may play a role in the structure and function of the aminoacyl-tRNA binding site. This is Large ribosomal subunit protein bL19 (rplS) from Chlamydia pneumoniae (Chlamydophila pneumoniae).